A 374-amino-acid polypeptide reads, in one-letter code: LIM domain-binding protein 1-A (374 aa).

Disordered regions lie at residues 1–24 (MLDR…IGRH), 249–297 (PPAE…ALSS), and 322–374 (TRLE…QSSQ). Over residues 267-297 (SGGSTMSSGGGNNNNSNSKKKSPASSFALSS) the composition is skewed to low complexity. The region spanning 299 to 338 (DVMVVGEPTLMGGEFGDEDERLITRLENTQFDAANGIDDE) is the LIM interaction domain (LID) domain. The span at 341-374 (FNSSPTMGTNSPWNSKAPSSQQGKNDNPSSQSSQ) shows a compositional bias: polar residues.

This sequence belongs to the LDB family. In terms of tissue distribution, expressed ubiquitously in the embryo and adult.

Its subcellular location is the nucleus. In terms of biological role, binds to the LIM domain of a wide variety of LIM domain-containing transcription factors. This is LIM domain-binding protein 1-A (ldb1a) from Danio rerio (Zebrafish).